The following is a 283-amino-acid chain: Polyamine aminopropyltransferase (283 aa).

A PABS domain is found at 5-241 (NNWYIEHFER…GWWSVTLARK (237 aa)). Glutamine 35 contacts S-methyl-5'-thioadenosine. Spermidine contacts are provided by histidine 66 and aspartate 90. S-methyl-5'-thioadenosine-binding positions include aspartate 110 and 141-142 (DG). Catalysis depends on aspartate 160, which acts as the Proton acceptor. 160-163 (DSTD) lines the spermidine pocket. Proline 167 provides a ligand contact to S-methyl-5'-thioadenosine.

It belongs to the spermidine/spermine synthase family. As to quaternary structure, homodimer or homotetramer.

Its subcellular location is the cytoplasm. It catalyses the reaction S-adenosyl 3-(methylsulfanyl)propylamine + putrescine = S-methyl-5'-thioadenosine + spermidine + H(+). The protein operates within amine and polyamine biosynthesis; spermidine biosynthesis; spermidine from putrescine: step 1/1. In terms of biological role, catalyzes the irreversible transfer of a propylamine group from the amino donor S-adenosylmethioninamine (decarboxy-AdoMet) to putrescine (1,4-diaminobutane) to yield spermidine. The chain is Polyamine aminopropyltransferase from Stenotrophomonas maltophilia (strain R551-3).